A 403-amino-acid polypeptide reads, in one-letter code: NADH-quinone oxidoreductase subunit D (403 aa).

Belongs to the complex I 49 kDa subunit family. As to quaternary structure, NDH-1 is composed of 14 different subunits. Subunits NuoB, C, D, E, F, and G constitute the peripheral sector of the complex.

The protein resides in the cell membrane. It catalyses the reaction a quinone + NADH + 5 H(+)(in) = a quinol + NAD(+) + 4 H(+)(out). NDH-1 shuttles electrons from NADH, via FMN and iron-sulfur (Fe-S) centers, to quinones in the respiratory chain. The immediate electron acceptor for the enzyme in this species is believed to be a menaquinone. Couples the redox reaction to proton translocation (for every two electrons transferred, four hydrogen ions are translocated across the cytoplasmic membrane), and thus conserves the redox energy in a proton gradient. The sequence is that of NADH-quinone oxidoreductase subunit D from Amoebophilus asiaticus (strain 5a2).